A 294-amino-acid chain; its full sequence is Nucleotide-binding protein Smlt1108 (294 aa).

Residue 16 to 23 participates in ATP binding; sequence GLSGSGKS. 69–72 is a binding site for GTP; sequence DVRG.

It belongs to the RapZ-like family.

In terms of biological role, displays ATPase and GTPase activities. This is Nucleotide-binding protein Smlt1108 from Stenotrophomonas maltophilia (strain K279a).